A 2362-amino-acid chain; its full sequence is Filaggrin-2 (2362 aa).

Positions 1-81 (MAYLLRSVVT…TEFILMIFKL (81 aa)) are S-100-like. EF-hand domains are found at residues 8–43 (VVTI…EFRP) and 49–84 (DDPD…LALA). Positions 62, 64, 66, 68, and 73 each coordinate Ca(2+). 2 disordered regions span residues 96–238 (ASGS…GLSC) and 284–2109 (GCCR…SSIP). Acidic residues predominate over residues 111 to 120 (EESETEEEEE). Composition is skewed to basic and acidic residues over residues 159 to 174 (KRLE…EESR) and 189 to 214 (NKEK…PSRE). 2 Filaggrin repeats span residues 261 to 308 (GYNT…NQSC) and 373 to 414 (HSSC…SNGF). Composition is skewed to polar residues over residues 284–317 (GCCR…CQSG), 342–375 (SCSQ…SHSS), and 383–395 (GATQ…QQRM). Positions 396–411 (SSCGHSSSSHQKGCSS) are enriched in low complexity. Polar residues-rich tracts occupy residues 421–443 (ASGS…SSGF) and 450–469 (SGQS…SGYS). 3 stretches are compositionally biased toward low complexity: residues 474-519 (GSGQ…QSSG), 539-550 (GSRQSSGSEQHG), and 567-580 (SQSS…SGSQ). A Filaggrin 3 repeat occupies 555–607 (QSSGSGKHETGPSQSSSSGHHGSGSQQHGGGSGQSTGFGEHESSSGHSSSSGQ). Positions 581-590 (QHGGGSGQST) are enriched in gly residues. Over residues 599 to 618 (SGHSSSSGQHRSGSRHSSGS) the composition is skewed to low complexity. The segment covering 632–653 (GHHGSGSQQHGGGSGNSTGFGE) has biased composition (gly residues). Residues 654 to 675 (HGSSSHPLPSSGQNESSSGQSS) show a composition bias toward low complexity. A Filaggrin 4 repeat occupies 672 to 723 (GQSSRSERHGTGSGQSSGFGQHGSGSHQSSSSGHNEYGSGQTSSSWPHGKGS). Positions 682 to 694 (TGSGQSSGFGQHG) are enriched in gly residues. Low complexity-rich tracts occupy residues 695 to 705 (SGSHQSSSSGH), 728 to 754 (GYGE…QSSS), and 780 to 798 (GYGE…WQHG). Gly residues predominate over residues 826-838 (TGSGQSLGFGQHG). Positions 846-864 (SSGHYESVSEPSSSSWQHG) are enriched in low complexity. A Filaggrin 5 repeat occupies 880 to 927 (HGQSSSAWNHGNESGQSNGYGEHESGHGQSSSAWNHGNESGQSNGFGE). Polar residues-rich tracts occupy residues 886–896 (AWNHGNESGQS) and 912–925 (AWNH…SNGF). The span at 973–982 (ESSEGEEHSV) shows a compositional bias: basic and acidic residues. Residues 984-1035 (PRRYSGYGHGQGQAGHQQRESGYGQRGRPQGPSQDSSRQPQAGHGQPSQSGY) form a Filaggrin 6 repeat. Over residues 1014–1035 (GPSQDSSRQPQAGHGQPSQSGY) the composition is skewed to polar residues. Positions 1047-1059 (EYSEGEAHSEVSQ) are enriched in basic and acidic residues. Basic residues predominate over residues 1067–1077 (CHCHCHGQARH). Residues 1104–1121 (GPGQPSQSGSRRSPRSQP) are compositionally biased toward low complexity. Residues 1142 to 1152 (SGHGHGQGQGQ) are compositionally biased toward gly residues. Positions 1162–1174 (HGQQGRPQGPSQD) are enriched in polar residues. One copy of the Filaggrin 7 repeat lies at 1165 to 1210 (QGRPQGPSQDSSRQPQAGQGQPSQSGSGRSPRRSPVHPESSEGEEH). A compositionally biased stretch (low complexity) spans 1175 to 1193 (SSRQPQAGQGQPSQSGSGR). Phosphoserine occurs at positions 1198, 1204, and 1205. Positions 1220-1232 (SGHGHGQGQGQGQ) are enriched in gly residues. Residues 1255–1273 (SSRQPQAGQGQPSQSGSGR) are compositionally biased toward low complexity. Phosphoserine occurs at positions 1278, 1284, and 1285. A Filaggrin 8 repeat occupies 1280 to 1334 (VHPESSEGEEHSVVPQRHSGSGHGHGQGQGQAGHQQRESVHGQPVRPEVPTQDSS). The segment covering 1300-1310 (SGHGHGQGQGQ) has biased composition (gly residues). Residues 1333-1351 (SSRQPQAGQGQPSQSGSGR) show a composition bias toward low complexity. Residues S1356, S1362, and S1363 each carry the phosphoserine modification. Residues 1377–1396 (ESCHCHCHDQAGHQQRESVH) are compositionally biased toward basic and acidic residues. Over residues 1413-1436 (PQAGPGQPSQSGSRRSPRSSPVHP) the composition is skewed to low complexity. 2 positions are modified to phosphoserine: S1438 and S1439. Gly residues predominate over residues 1454–1464 (SGHGHGQGQGQ). One copy of the Filaggrin 9 repeat lies at 1474 to 1522 (HGQRGRPQGPTQDSSRQPQAGQGQPSQSGSGRSPRRSPVHPESSEGEEH). A compositionally biased stretch (low complexity) spans 1487–1505 (SSRQPQAGQGQPSQSGSGR). A phosphoserine mark is found at S1510, S1516, and S1517. Gly residues predominate over residues 1532–1544 (SGHGHGHGQGQGQ). Over residues 1567-1585 (SSRQPQAGQGQPSQSGSGR) the composition is skewed to low complexity. Residues S1590, S1596, and S1597 each carry the phosphoserine modification. 2 stretches are compositionally biased toward low complexity: residues 1643–1661 (SSRQ…GSGR) and 1683–1696 (QRHS…GQGQ). Over residues 1698 to 1708 (HAEHQQRESVH) the composition is skewed to basic and acidic residues. One copy of the Filaggrin 10 repeat lies at 1723–1756 (RQPQAGQGQPSLSGSGRSPRRSPVHPESSEGEEH). Low complexity predominate over residues 1724–1739 (QPQAGQGQPSLSGSGR). Residues S1744, S1750, S1751, S1824, S1830, and S1831 each carry the phosphoserine modification. A compositionally biased stretch (low complexity) spans 1801-1825 (SSRQPQAGQGQPSQSGSGRSPGRSP). Basic and acidic residues predominate over residues 1829–1848 (ESSEGEEHSVVPQRHSESGH). The segment covering 1879–1897 (SSRQPQAGQGQPSQSGSGR) has biased composition (low complexity). Phosphoserine occurs at positions 1902, 1908, and 1909. Over residues 1924 to 1934 (SGHGHGQGQGQ) the composition is skewed to gly residues. A compositionally biased stretch (low complexity) spans 1949–1975 (RPQGPSQDSSSQPQASQGQPSQSGSGR). Phosphoserine is present on residues S1980, S1986, and S1987. Residues 2002–2012 (SGHGHGQGQGQ) are compositionally biased toward gly residues. Residues 2016–2070 (QQRESLHGQRGRSQSPFHPSHSIHWQSKCTISKKSSRLSGHYGRNHFQSTISGNQ) form a Filaggrin 11 repeat. 3 stretches are compositionally biased toward polar residues: residues 2026 to 2048 (GRSQ…TISK), 2061 to 2079 (HFQS…SSRH), and 2100 to 2109 (LRSNSQSSIP). S2104 carries the post-translational modification Phosphoserine. One copy of the Filaggrin 12 repeat lies at 2218–2259 (DDSQYILFQKHLESPSFGNQSGFSPNERQLYTCNESIDSYHL).

Belongs to the S100-fused protein family. This sequence in the N-terminal section; belongs to the S-100 family. Deiminated by PADI1, PADI2 or PADI3 in vitro. The deiminated form is degraded by calpain-1/CAPN1 more quickly and into shorter peptides than the intact protein. Post-translationally, may be processed by calpain-1/CAPN1.

It is found in the cytoplasm. The protein resides in the cytoplasmic granule. In terms of biological role, essential for normal cell-cell adhesion in the cornified cell layers. Important for proper integrity and mechanical strength of the stratum corneum of the epidermis. This Mus musculus (Mouse) protein is Filaggrin-2 (Flg2).